We begin with the raw amino-acid sequence, 614 residues long: Dihydroxy-acid dehydratase (614 aa).

Asp81 is a binding site for Mg(2+). Residue Cys122 participates in [2Fe-2S] cluster binding. Mg(2+)-binding residues include Asp123 and Lys124. N6-carboxylysine is present on Lys124. Cys195 contributes to the [2Fe-2S] cluster binding site. Residue Glu491 participates in Mg(2+) binding. Residue Ser517 is the Proton acceptor of the active site.

The protein belongs to the IlvD/Edd family. In terms of assembly, homodimer. [2Fe-2S] cluster is required as a cofactor. Requires Mg(2+) as cofactor.

It catalyses the reaction (2R)-2,3-dihydroxy-3-methylbutanoate = 3-methyl-2-oxobutanoate + H2O. The catalysed reaction is (2R,3R)-2,3-dihydroxy-3-methylpentanoate = (S)-3-methyl-2-oxopentanoate + H2O. It participates in amino-acid biosynthesis; L-isoleucine biosynthesis; L-isoleucine from 2-oxobutanoate: step 3/4. It functions in the pathway amino-acid biosynthesis; L-valine biosynthesis; L-valine from pyruvate: step 3/4. Functionally, functions in the biosynthesis of branched-chain amino acids. Catalyzes the dehydration of (2R,3R)-2,3-dihydroxy-3-methylpentanoate (2,3-dihydroxy-3-methylvalerate) into 2-oxo-3-methylpentanoate (2-oxo-3-methylvalerate) and of (2R)-2,3-dihydroxy-3-methylbutanoate (2,3-dihydroxyisovalerate) into 2-oxo-3-methylbutanoate (2-oxoisovalerate), the penultimate precursor to L-isoleucine and L-valine, respectively. The chain is Dihydroxy-acid dehydratase from Rhodopseudomonas palustris (strain BisA53).